A 917-amino-acid chain; its full sequence is Nitrate reductase [NADH] 2 (917 aa).

The tract at residues 1 to 72 (MAASVDNRQY…SEDENETHNS (72 aa)) is disordered. Over residues 37–47 (AHQNQTTNQTV) the composition is skewed to polar residues. A compositionally biased stretch (acidic residues) spans 57-67 (DDEDVSSEDEN). Position 191 (Cys191) interacts with Mo-molybdopterin. Residues 542-617 (AKMYSMSEVK…LEDYRIGELI (76 aa)) enclose the Cytochrome b5 heme-binding domain. Residues His577 and His600 each contribute to the heme site. The FAD-binding FR-type domain occupies 660-772 (RAKVPVQLVE…KGPLGHVEYL (113 aa)). Residues 712–715 (RAYT), 729–733 (VVKIY), Phe734, Phe741, 746–748 (LMS), and Thr799 each bind FAD.

The protein belongs to the nitrate reductase family. In terms of assembly, homodimer. Requires FAD as cofactor. The cofactor is heme. It depends on Mo-molybdopterin as a cofactor. As to expression, root, leaf, and shoot.

It catalyses the reaction nitrite + NAD(+) + H2O = nitrate + NADH + H(+). Its function is as follows. Nitrate reductase is a key enzyme involved in the first step of nitrate assimilation in plants, fungi and bacteria. The protein is Nitrate reductase [NADH] 2 (NIA2) of Arabidopsis thaliana (Mouse-ear cress).